Consider the following 596-residue polypeptide: Aspartate--tRNA(Asp/Asn) ligase (596 aa).

Glu173 lines the L-aspartate pocket. The interval 197-200 is aspartate; that stretch reads QLFK. Residue Arg219 coordinates L-aspartate. ATP is bound by residues 219-221 and Gln228; that span reads RDE. His450 lines the L-aspartate pocket. Glu485 provides a ligand contact to ATP. Arg492 contacts L-aspartate. 537-540 provides a ligand contact to ATP; sequence GLDR.

The protein belongs to the class-II aminoacyl-tRNA synthetase family. Type 1 subfamily. As to quaternary structure, homodimer.

The protein localises to the cytoplasm. The catalysed reaction is tRNA(Asx) + L-aspartate + ATP = L-aspartyl-tRNA(Asx) + AMP + diphosphate. Its function is as follows. Aspartyl-tRNA synthetase with relaxed tRNA specificity since it is able to aspartylate not only its cognate tRNA(Asp) but also tRNA(Asn). Reaction proceeds in two steps: L-aspartate is first activated by ATP to form Asp-AMP and then transferred to the acceptor end of tRNA(Asp/Asn). This Hydrogenovibrio crunogenus (strain DSM 25203 / XCL-2) (Thiomicrospira crunogena) protein is Aspartate--tRNA(Asp/Asn) ligase.